Consider the following 532-residue polypeptide: MINNHPIREKPKHIIFNLLSLIFFLIFLSTVVSSQSPSYTTHKTQRLTETKTIPELIIADLNLTILKVNLASSNFSDLQTRLFPNLTHYERCAFEDCLGLLDDTISDLETAVSDLRSSSLEFNDISMLLTNVMTYQDTCLDGFSTSDNENNNDMTYELPENLKEIILDISNNLSNSLHMLQVISRKKPSPKSSEVDVEYPSWLSENDQRLLEAPVQETNYNLSVAIDGTGNFTTINDAVFAAPNMSETRFIIYIKGGEYFENVELPKKKTMIMFIGDGIGKTVIKANRSRIDGWSTFQTPTVGVKGKGYIAKDISFVNSAGPAKAQAVAFRSGSDHSAFYRCEFDGYQDTLYVHSAKQFYRECDIYGTIDFIFGNAAVVFQNSSLYARKPNPGHKIAFTAQSRNQSDQPTGISILNCRILAAPDLIPVKENFKAYLGRPWRKYSRTVIIKSFIDDLIHPAGWLEGKKDFALETLYYGEYMNEGPGANMAKRVTWPGFRRIENQTEATQFTVGPFIDGSTWLNSTGIPFSLGF.

A signal peptide spans 1–34 (MINNHPIREKPKHIIFNLLSLIFFLIFLSTVVSS). Residues 35 to 169 (QSPSYTTHKT…ENLKEIILDI (135 aa)) form a pectinesterase inhibitor 39 region. 8 N-linked (GlcNAc...) asparagine glycosylation sites follow: Asn62, Asn74, Asn85, Asn172, Asn221, Asn231, Asn244, and Asn287. Residues 221-518 (NLSVAIDGTG…FTVGPFIDGS (298 aa)) form a pectinesterase 39 region. Positions 296 and 326 each coordinate substrate. Asp349 (proton donor; for pectinesterase activity) is an active-site residue. The active-site Nucleophile; for pectinesterase activity is the Asp370. N-linked (GlcNAc...) asparagine glycans are attached at residues Asn382 and Asn404. The substrate site is built by Arg438 and Trp440. Asn502 and Asn522 each carry an N-linked (GlcNAc...) asparagine glycan.

This sequence in the N-terminal section; belongs to the PMEI family. It in the C-terminal section; belongs to the pectinesterase family. Expressed in siliques but not in flower buds.

The protein localises to the secreted. The protein resides in the cell wall. It catalyses the reaction [(1-&gt;4)-alpha-D-galacturonosyl methyl ester](n) + n H2O = [(1-&gt;4)-alpha-D-galacturonosyl](n) + n methanol + n H(+). Its pathway is glycan metabolism; pectin degradation; 2-dehydro-3-deoxy-D-gluconate from pectin: step 1/5. Its function is as follows. Acts in the modification of cell walls via demethylesterification of cell wall pectin. In Arabidopsis thaliana (Mouse-ear cress), this protein is Probable pectinesterase/pectinesterase inhibitor 39 (PME39).